The primary structure comprises 308 residues: Cytochrome b (308 aa).

Helical transmembrane passes span 1-21 (FGLLLGICLIVQIVTGLLLAA), 45-66 (WLIRNLHANGASFFFICIYLHI), 81-101 (WNIGVILLLTLMATAFVGYVL), and 146-166 (FFALHFLLPFVIAGLTLVHLT). Heme b-binding residues include H51 and H65. Heme b is bound by residues H150 and H164. Position 169 (H169) interacts with a ubiquinone. 3 consecutive transmembrane segments (helical) span residues 194 to 214 (TKDMLGFALMLIPLITLALFS), 256 to 276 (LGGVLALAASVLVLFLIPLLH), and 288 to 308 (LSQILFWTLVANLLVLTWVGS).

It belongs to the cytochrome b family. The cytochrome bc1 complex contains 11 subunits: 3 respiratory subunits (MT-CYB, CYC1 and UQCRFS1), 2 core proteins (UQCRC1 and UQCRC2) and 6 low-molecular weight proteins (UQCRH/QCR6, UQCRB/QCR7, UQCRQ/QCR8, UQCR10/QCR9, UQCR11/QCR10 and a cleavage product of UQCRFS1). This cytochrome bc1 complex then forms a dimer. Heme b serves as cofactor.

It localises to the mitochondrion inner membrane. In terms of biological role, component of the ubiquinol-cytochrome c reductase complex (complex III or cytochrome b-c1 complex) that is part of the mitochondrial respiratory chain. The b-c1 complex mediates electron transfer from ubiquinol to cytochrome c. Contributes to the generation of a proton gradient across the mitochondrial membrane that is then used for ATP synthesis. The sequence is that of Cytochrome b (MT-CYB) from Pomatostomus temporalis (Grey-crowned babbler).